Consider the following 292-residue polypeptide: Sulfofructosephosphate aldolase (292 aa).

The active-site Schiff-base intermediate with substrate is the K193.

It belongs to the aldolase LacD family. In terms of assembly, homotetramer.

The catalysed reaction is 6-deoxy-6-sulfo-D-fructose 1-phosphate = (2S)-3-sulfolactaldehyde + dihydroxyacetone phosphate. In terms of biological role, cleaves 6-deoxy-6-sulfo-D-fructose 1-phosphate (SFP) to form dihydroxyacetone phosphate (DHAP) and 3-sulfolactaldehyde (SLA). The polypeptide is Sulfofructosephosphate aldolase (yihT) (Escherichia coli O157:H7).